A 253-amino-acid chain; its full sequence is MIPPLSSLVRYDNPVLVSTSKDKGKGAKGTPGKKGALPPVEQKPGLTQTEDILNSILPPREWTEDGQLWVQYVSSTPATRLDVINLQEKLDQQLQQRQARETGICPIREELYAQTFDELIRQVTINCAERGLLLLRVRDEMRMTIAAYQTLYESAVAFGIRKALQTEQGKSEMESRITQLEGDVKDLERQVQEWKFKCEAIEKRESERREVEAKKHKDEVAYLENYAKQLKQQLETFLVPAKKGAPGAPAAAT.

The tract at residues 19 to 44 (TSKDKGKGAKGTPGKKGALPPVEQKP) is disordered. Residues 160 to 239 (IRKALQTEQG…LKQQLETFLV (80 aa)) adopt a coiled-coil conformation.

This sequence belongs to the inner dynein arm light chain family.

The protein resides in the cytoplasm. The protein localises to the cytoskeleton. It localises to the flagellum axoneme. Plays a dynamic role in flagellar motility. May be necessary for stable assembly of a subset of inner dynein arms or for the binding of these arms to the outer doublet microtubules of the axoneme. This chain is 28 kDa inner dynein arm light chain, axonemal (IDA4), found in Chlamydomonas reinhardtii (Chlamydomonas smithii).